The primary structure comprises 1712 residues: Latent-transforming growth factor beta-binding protein 1 (1712 aa).

The signal sequence occupies residues 1–20; that stretch reads MAGAWLRWGLLLWAGLLAWS. The tract at residues 63–148 is disordered; it reads SSTATSSRSL…QDTQSSGGSR (86 aa). Positions 136–147 are enriched in polar residues; sequence KVQQDTQSSGGS. The EGF-like 1 domain occupies 181-213; the sequence is TKPSCVPPCQNGGMCLRPQFCVCKPGTKGKACE. Cystine bridges form between C185-C195, C189-C201, and C203-C212. N-linked (GlcNAc...) asparagine glycans are attached at residues N339 and N370. One can recognise an EGF-like 2 domain in the interval 391–423; sequence RVVICHLPCMNGGQCSSRDKCQCPPNFTGKLCQ. Disulfide bonds link C395-C405, C399-C411, C413-C422, C551-C573, C560-C586, and C574-C589. A glycan (N-linked (GlcNAc...) asparagine) is linked at N416. The TB 1 domain occupies 549 to 601; sequence GRCFQETIGSQCGKALPGLSKQEDCCGTVGTSWGFNKCQKCPKKQSYHGYTQM. N612 is a glycosylation site (N-linked (GlcNAc...) asparagine). The EGF-like 3; calcium-binding domain maps to 618 to 658; it reads DINECQLQGVCPNGECLNTMGSYRCSCKMGFGPDPTFSSCV. Intrachain disulfides connect C622–C633, C628–C642, C644–C657, C671–C694, C681–C706, C695–C709, and C696–C721. A glycan (O-linked (Glc) serine) is linked at S639. Positions 669–721 constitute a TB 2 domain; that stretch reads GPCYRLVSPGRQCMHPLSVHLTKQICCCSVGKAWGPQCEKCPLPGTAAFKEIC. Positions 752–803 are disordered; the sequence is KNTQPVAKSTHPPPLPAKEEPVEALTSSREHGPGVAEPEVVTAPPEKEIPSL. 2 O-linked (GalNAc...) threonine glycosylation sites follow: T761 and T793. Residues 865 to 906 form the EGF-like 4; calcium-binding domain; that stretch reads EINECTVNPDICGAGHCINLPVRYTCICYEGYKFSEQQRKCI. Intrachain disulfides connect C869–C881, C876–C890, C892–C905, C911–C923, C918–C932, C934–C947, C953–C964, C959–C973, C976–C988, C994–C1005, C1000–C1014, C1017–C1028, C1034–C1045, C1040–C1054, C1056–C1069, C1075–C1086, C1081–C1095, C1097–C1110, C1116–C1127, C1122–C1136, C1138–C1151, C1157–C1169, C1164–C1178, C1180–C1192, C1198–C1210, C1204–C1219, C1221–C1234, C1240–C1252, C1246–C1261, C1263–C1276, C1282–C1294, C1289–C1303, C1305–C1319, C1340–C1363, C1350–C1375, C1364–C1380, and C1365–C1392. The region spanning 907 to 948 is the EGF-like 5; calcium-binding domain; the sequence is DIDECAQAQHLCSQGRCENTEGSFLCICPAGFIASEEGSNCI. An O-linked (Glc) serine glycan is attached at S929. The EGF-like 6; calcium-binding domain occupies 949–989; sequence DVDECLRPDVCRDGRCINTAGAFRCEYCDSGYRMSRRGHCE. The residue at position 966 (N966) is a (3R)-3-hydroxyasparagine. The region spanning 990–1029 is the EGF-like 7; calcium-binding domain; it reads DIDECLTPSTCPEEQCVNSPGSYQCVPCTEGFRGWNGQCL. A glycan (O-linked (Glc) serine) is linked at S1011. One can recognise an EGF-like 8; calcium-binding domain in the interval 1030–1070; sequence DVDECLQPKVCTNGSCTNLEGSYMCSCHKGYSPTPDHRHCQ. N-linked (GlcNAc...) asparagine glycosylation occurs at N1042. Residue S1051 is glycosylated (O-linked (Glc) serine). One can recognise an EGF-like 9; calcium-binding domain in the interval 1071-1111; sequence DIDECQQGNLCMNGQCKNTDGSFRCTCGQGYQLSAAKDQCE. Positions 1112 to 1152 constitute an EGF-like 10; calcium-binding domain; it reads DIDECEHRHLCSHGQCRNTEGSFQCLCNQGYRASVLGDHCE. N1129 bears the (3R)-3-hydroxyasparagine mark. The O-linked (Glc) serine glycan is linked to S1133. In terms of domain architecture, EGF-like 11; calcium-binding spans 1153–1193; the sequence is DINECLEDSSVCQGGDCINTAGSYDCTCPDGLQLNDNKGCQ. The EGF-like 12; calcium-binding domain occupies 1194–1235; that stretch reads DINECAQPGLCAPHGECLNTQGSFHCVCEQGFSISADGRTCE. S1216 carries O-linked (Glc) serine glycosylation. Residues 1236 to 1277 form the EGF-like 13; calcium-binding domain; that stretch reads DIDECVNNTVCDSHGFCDNTAGSFRCLCYQGFQAPQDGQGCV. N-linked (GlcNAc...) asparagine glycosylation occurs at N1242. One can recognise an EGF-like 14; calcium-binding domain in the interval 1278–1320; the sequence is DVNECELLSGVCGEAFCENVEGSFLCVCADENQEYSPMTGQCR. The tract at residues 1335-1402 is 8-Cys3 region; it reads EEKKECYYNL…PRGKGFVPAG (68 aa). Residues 1338–1392 form the TB 3 domain; it reads KECYYNLNDASLCDNVLAPNVTKQECCCTSGAGWGDNCEIFPCPVQGTAEFSEMC. The N-linked (GlcNAc...) asparagine glycan is linked to N1357. Phosphoserine is present on S1405. Positions 1415–1457 constitute an EGF-like 15; calcium-binding domain; the sequence is DADECLLFGEEICKNGYCLNTQPGYECYCKEGTYYDPVKLQCF. Disulfide bonds link C1419–C1432, C1427–C1441, C1443–C1456, C1462–C1473, C1468–C1482, C1484–C1497, C1517–C1541, C1527–C1553, C1542–C1556, and C1543–C1568. One can recognise an EGF-like 16; calcium-binding domain in the interval 1458–1498; sequence DMDECQDPNSCIDGQCVNTEGSYNCFCTHPMVLDASEKRCV. O-linked (Glc) serine glycosylation is present at S1479. The tract at residues 1498–1712 is C-terminal domain; it reads VQPTESNEQI…LNLDKDSDLE (215 aa). The 54-residue stretch at 1515 to 1568 folds into the TB 4 domain; sequence DLCWEHLSEEYVCSRPLVGKQTTYTECCCLYGEAWGMQCALCPMKDSDDYAQLC. S1588 and S1607 each carry phosphoserine. An EGF-like 17 domain is found at 1612–1652; sequence QAEECGILNGCENGRCVRVQEGYTCDCFDGYHLDMAKMTCV. 6 disulfide bridges follow: C1616–C1627, C1622–C1636, C1638–C1651, C1657–C1672, C1667–C1681, and C1683–C1696. Residues 1653-1697 form the EGF-like 18; calcium-binding domain; it reads DVNECSELNNRMSLCKNAKCINTEGSYKCVCLPGYVPSDKPNYCT. An O-linked (Glc) serine glycan is attached at S1678.

It belongs to the LTBP family. In terms of assembly, interacts with TGFB1; associates via disulfide bonds with the Latency-associated peptide chain (LAP) regulatory chain of TGFB1, leading to regulate activation of TGF-beta-1. LTBP1 does not bind directly to TGF-beta-1, the active chain of TGFB1. Interacts (via C-terminal domain) with FBN1 (via N-terminal domain). Interacts with FBN2. Interacts with ADAMTSL2. Interacts with EFEMP2. Post-translationally, contains hydroxylated asparagine residues. In terms of processing, two intrachain disulfide bonds from the TB3 domain are rearranged upon TGFB1 binding, and form interchain bonds with TGFB1 propeptide, anchoring it to the extracellular matrix. O-glycosylated on serine residues by POGLUT2 and POGLUT3.

It localises to the secreted. It is found in the extracellular space. The protein localises to the extracellular matrix. Its function is as follows. Key regulator of transforming growth factor beta (TGFB1, TGFB2 and TGFB3) that controls TGF-beta activation by maintaining it in a latent state during storage in extracellular space. Associates specifically via disulfide bonds with the Latency-associated peptide (LAP), which is the regulatory chain of TGF-beta, and regulates integrin-dependent activation of TGF-beta. Outcompeted by LRRC32/GARP for binding to LAP regulatory chain of TGF-beta. In Rattus norvegicus (Rat), this protein is Latent-transforming growth factor beta-binding protein 1 (Ltbp1).